Consider the following 28-residue polypeptide: Conotoxin as14b (28 aa).

Intrachain disulfides connect C7–C27 and C11–C23.

It belongs to the conotoxin L superfamily. As to expression, expressed by the venom duct.

It localises to the secreted. In terms of biological role, in vivo, intracranial injection elicits scratching and grooming activity in mice, and causes body and rear limb extension and tail curling immediately upon injection. This is Conotoxin as14b from Conus cancellatus (Cancellate cone).